We begin with the raw amino-acid sequence, 367 residues long: Probable butyrate kinase (367 aa).

It belongs to the acetokinase family.

It is found in the cytoplasm. The enzyme catalyses butanoate + ATP = butanoyl phosphate + ADP. The sequence is that of Probable butyrate kinase from Bacillus cereus (strain G9842).